The primary structure comprises 729 residues: MGRRKKIVQECETLMNTPEQIRNIAIAAHVDHGKTTLTDNLLAGAGMISDDTAGEQLAMDTEEDEQERGITIDAANVSMTHEYEDTNHLINLIDTPGHVDFGGDVTRAMRAVDGALVVVDAVEGAMPQTETVLRQALREGVKPTLFINKVDRLISELQEGPEEMQKRLMSVIADVNELIRGMTEEMDDIDEDWTVSVEEGTVGFGSALYKWGVSMPSMQRTGMDFGDIMDLERSDKRQELHERTPLADVVLDMVCEHFPNPIDAQPRRIPRIWRGDDESEVAESMQFVDEDGEVVLMVTDIGVDPHAGEIAAGRVFSGTLEKGQELYVSGTAGKNRVQSVGIYMGGEREEVEEVPAGNIAAVTGLKDAIAGSTVSSVEMTPFESIDHISEPVITKSIEAKNMDDLPKLIETLRQVSKEDPTIQIEINEDTGEHLISGQGELHLEVQTQRIERNQGIPVNTGEPIVVYREAPQQPSREVEGISPNRHNRFYISVEPLEQDIVDAIKLGDASMDMPELERREALQEAGMEKETSQNVEHIHGTNVFIDDTKGIQHLNETMELLIEGLEEALNDGPLAAEPVQGSLIRLHDARLHEDAIHRGPAQVIPAMREAVHNSLIDAEIRLLEPIQNVRIDVPNAHMGAASGEIQGRRGRVDDMYQEGDLMVVEGVAPVDEMIGFSSDIRSATEGRASWNTENAGFQVMADNLQPDKIDEIRTRKGMKLELPETIDYF.

A tr-type G domain is found at 19 to 262 (EQIRNIAIAA…MVCEHFPNPI (244 aa)). Residues 28-35 (AHVDHGKT), 94-98 (DTPGH), and 148-151 (NKVD) contribute to the GTP site. Residue His597 is modified to Diphthamide.

It belongs to the TRAFAC class translation factor GTPase superfamily. Classic translation factor GTPase family. EF-G/EF-2 subfamily.

It localises to the cytoplasm. Its function is as follows. Catalyzes the GTP-dependent ribosomal translocation step during translation elongation. During this step, the ribosome changes from the pre-translocational (PRE) to the post-translocational (POST) state as the newly formed A-site-bound peptidyl-tRNA and P-site-bound deacylated tRNA move to the P and E sites, respectively. Catalyzes the coordinated movement of the two tRNA molecules, the mRNA and conformational changes in the ribosome. This Halomicrobium mukohataei (strain ATCC 700874 / DSM 12286 / JCM 9738 / NCIMB 13541) (Haloarcula mukohataei) protein is Elongation factor 2.